Reading from the N-terminus, the 212-residue chain is Orotate phosphoribosyltransferase (212 aa).

Residues Arg97, Lys101, His103, and 123–131 (DDLISTGGS) each bind 5-phospho-alpha-D-ribose 1-diphosphate. Ser127 serves as a coordination point for orotate.

The protein belongs to the purine/pyrimidine phosphoribosyltransferase family. PyrE subfamily. As to quaternary structure, homodimer. The cofactor is Mg(2+).

The catalysed reaction is orotidine 5'-phosphate + diphosphate = orotate + 5-phospho-alpha-D-ribose 1-diphosphate. The protein operates within pyrimidine metabolism; UMP biosynthesis via de novo pathway; UMP from orotate: step 1/2. Functionally, catalyzes the transfer of a ribosyl phosphate group from 5-phosphoribose 1-diphosphate to orotate, leading to the formation of orotidine monophosphate (OMP). The chain is Orotate phosphoribosyltransferase from Lactiplantibacillus plantarum (strain ATCC BAA-793 / NCIMB 8826 / WCFS1) (Lactobacillus plantarum).